We begin with the raw amino-acid sequence, 177 residues long: CCHC-type zinc finger nucleic acid binding protein (177 aa).

N-acetylserine is present on serine 2. The segment at 4–21 (NECFKCGRSGHWARECPT) adopts a CCHC-type 1 zinc-finger fold. Residue lysine 8 is modified to N6-acetyllysine. Residues arginine 25 and arginine 27 each carry the omega-N-methylarginine; by PRMT1 modification. The interval 25 to 38 (RGRGMRSRGRGGFT) is RNA-binding Arg/Gly-rich region (RGG-box). Omega-N-methylarginine occurs at positions 32 and 34. Residue serine 49 is modified to Phosphoserine. 6 CCHC-type zinc fingers span residues 52–69 (DICY…DCDL), 72–89 (DACY…DCKE), 96–113 (QCCY…DCDH), 117–134 (QKCY…DCTK), 135–152 (VKCY…NCSK), and 156–173 (VNCY…ECTI). Omega-N-methylarginine is present on residues alanine 73, arginine 79, and glycine 80.

In terms of assembly, associates with the 40S ribosomal subunit, the 80S ribosome and with polysomes. In terms of processing, arginine methylation by PRMT1 in the Arg/Gly-rich region impedes RNA binding. As to expression, expressed in the liver, kidney, spleen, testis, lung, muscle and adrenal glands.

It localises to the nucleus. It is found in the cytoplasm. Its subcellular location is the endoplasmic reticulum. In terms of biological role, single-stranded DNA-binding protein that preferentially binds to the sterol regulatory element (SRE) sequence 5'-GTGCGGTG-3', and thereby mediates transcriptional repression. Has a role as transactivator of the Myc promoter. Binds single-stranded RNA in a sequence-specific manner. Its function is as follows. Binds G-rich elements in target mRNA coding sequences. Prevents G-quadruplex structure formation in vitro, suggesting a role in supporting translation by resolving stable structures on mRNAs. Functionally, binds to RNA. The chain is CCHC-type zinc finger nucleic acid binding protein from Homo sapiens (Human).